Consider the following 499-residue polypeptide: Aspartyl/glutamyl-tRNA(Asn/Gln) amidotransferase subunit B (499 aa).

Belongs to the GatB/GatE family. GatB subfamily. Heterotrimer of A, B and C subunits.

It carries out the reaction L-glutamyl-tRNA(Gln) + L-glutamine + ATP + H2O = L-glutaminyl-tRNA(Gln) + L-glutamate + ADP + phosphate + H(+). The enzyme catalyses L-aspartyl-tRNA(Asn) + L-glutamine + ATP + H2O = L-asparaginyl-tRNA(Asn) + L-glutamate + ADP + phosphate + 2 H(+). Its function is as follows. Allows the formation of correctly charged Asn-tRNA(Asn) or Gln-tRNA(Gln) through the transamidation of misacylated Asp-tRNA(Asn) or Glu-tRNA(Gln) in organisms which lack either or both of asparaginyl-tRNA or glutaminyl-tRNA synthetases. The reaction takes place in the presence of glutamine and ATP through an activated phospho-Asp-tRNA(Asn) or phospho-Glu-tRNA(Gln). The chain is Aspartyl/glutamyl-tRNA(Asn/Gln) amidotransferase subunit B from Mesorhizobium japonicum (strain LMG 29417 / CECT 9101 / MAFF 303099) (Mesorhizobium loti (strain MAFF 303099)).